We begin with the raw amino-acid sequence, 118 residues long: UPF0251 protein TTE1845 (118 aa).

The protein belongs to the UPF0251 family.

This is UPF0251 protein TTE1845 from Caldanaerobacter subterraneus subsp. tengcongensis (strain DSM 15242 / JCM 11007 / NBRC 100824 / MB4) (Thermoanaerobacter tengcongensis).